The following is a 399-amino-acid chain: Elongation factor Tu (399 aa).

The region spanning 10–207 is the tr-type G domain; sequence KPHLNIGTIG…AVDNYVPEPQ (198 aa). The interval 19-26 is G1; that stretch reads GHIDHGKT. 19–26 serves as a coordination point for GTP; the sequence is GHIDHGKT. T26 provides a ligand contact to Mg(2+). The segment at 60–64 is G2; it reads GITIN. Positions 81 to 84 are G3; the sequence is DCPG. GTP-binding positions include 81–85 and 136–139; these read DCPGH and NKVD. Positions 136 to 139 are G4; sequence NKVD. Residues 174–176 are G5; sequence SAL.

It belongs to the TRAFAC class translation factor GTPase superfamily. Classic translation factor GTPase family. EF-Tu/EF-1A subfamily. As to quaternary structure, monomer.

The protein localises to the cytoplasm. The catalysed reaction is GTP + H2O = GDP + phosphate + H(+). GTP hydrolase that promotes the GTP-dependent binding of aminoacyl-tRNA to the A-site of ribosomes during protein biosynthesis. This is Elongation factor Tu from Kosmotoga olearia (strain ATCC BAA-1733 / DSM 21960 / TBF 19.5.1).